The following is a 525-amino-acid chain: MCGILLHYCPNNNYLNDELIEFPEGTEFGDTTCTNESSIFNKIIPYIAARGPNYSSLRAVKAYRISWFSSVLSLRQPFTKQSINVDDRYFLQFNGELYNKEISQGDNDSLYIASMLQNLKEGMGVIDVIKSLEGEYAYTIYDVNSSKLYFGRDPIGRRSLSYSVTPDNELYVASVTGSAGSFQDCIGGVIYEYDTRTKLLNSNQRSHLPYEVTSEIDLNFTSLSEVSKNLYAVLRDSVKKRVESIHPRHIENSPIAVLFSGGIDCSVIVALICEVLQENDYKCGKPVIELLNVSFENPRTGLFPSDTPDRKLSINSAKTLQNLYPNVDIKLVEVDVPYDEYLKWKPFVINLMYPKQTEMDLSIAIAFFFASRGRGFLTSLNGERTPYQRHGIVLFSGLGADELYGGYHKFANKPPHELVEELTRQINNIYDRNLNRDDKVIAHNGVEVRYPFLDEYVIKLSTAEIPINFKVNKLILRKVASQYLKLDGISSEPKRAIQFGAKSAKMTKDGNKHGTDLLKENRNCS.

Cys-2 (for GATase activity) is an active-site residue. In terms of domain architecture, Glutamine amidotransferase type-2 spans 2–209 (CGILLHYCPN…LNSNQRSHLP (208 aa)). Positions 210–523 (YEVTSEIDLN…GTDLLKENRN (314 aa)) constitute an Asparagine synthetase domain. The tract at residues 503 to 525 (SAKMTKDGNKHGTDLLKENRNCS) is disordered. The span at 506 to 525 (MTKDGNKHGTDLLKENRNCS) shows a compositional bias: basic and acidic residues.

It localises to the cytoplasm. This is Asparagine synthetase domain-containing protein YML096W from Saccharomyces cerevisiae (strain ATCC 204508 / S288c) (Baker's yeast).